Consider the following 111-residue polypeptide: Translation initiation factor 1A 1 (111 aa).

Residues 1–28 are disordered; it reads MTLADLKKPTSRASPSTEETVTRVRTPR. The S1-like domain maps to 22-96; that stretch reads TRVRTPRREN…EKADVIWKYT (75 aa).

This sequence belongs to the eIF-1A family.

In terms of biological role, seems to be required for maximal rate of protein biosynthesis. Enhances ribosome dissociation into subunits and stabilizes the binding of the initiator Met-tRNA(I) to 40 S ribosomal subunits. The sequence is that of Translation initiation factor 1A 1 (eIF1A1) from Methanosarcina mazei (strain ATCC BAA-159 / DSM 3647 / Goe1 / Go1 / JCM 11833 / OCM 88) (Methanosarcina frisia).